The primary structure comprises 458 residues: Transmembrane protein adipocyte-associated 1 homolog (458 aa).

N-linked (GlcNAc...) asparagine glycosylation is found at asparagine 21 and asparagine 45. 7 helical membrane passes run 81-101, 114-134, 152-172, 181-201, 225-245, 263-283, and 291-311; these read VILV…GSVI, AFTL…AYSM, IIIK…GLLF, ILIA…VQVI, FLFW…IMCL, LIYC…AALI, and LCFV…IIYF. Residues asparagine 323 and asparagine 324 are each glycosylated (N-linked (GlcNAc...) asparagine). The interval 409-458 is disordered; sequence RTGSDDYAHHRDSMLSEPSTGTTTRHLKGLGPQGSLVFEDDPSSLTSLRM. The segment covering 411–422 has biased composition (basic and acidic residues); the sequence is GSDDYAHHRDSM.

This sequence belongs to the UPF0359 family.

It is found in the membrane. This Caenorhabditis elegans protein is Transmembrane protein adipocyte-associated 1 homolog (tpra-1).